A 428-amino-acid chain; its full sequence is E3 ubiquitin-protein ligase RNF128 (428 aa).

The N-terminal stretch at 1–38 is a signal peptide; that stretch reads MGPPPGIGVYCRGGCGAARLLAWCFLLALSPHAPGSRG. N-linked (GlcNAc...) asparagine glycosylation is found at N48, N59, and N101. The region spanning 75-183 is the PA domain; sequence SPLEPVSGVL…LKGTKILQSI (109 aa). Residues 208–228 form a helical membrane-spanning segment; that stretch reads IFFVSVSFFIITAATVGYFIF. The segment at 277-318 adopts an RING-type; atypical zinc-finger fold; that stretch reads CAVCIELYKPNDLVRILTCNHIFHKTCVDPWLLEHRTCPMCK. The segment covering 342 to 351 has biased composition (polar residues); that stretch reads VSNEASNTAS. A disordered region spans residues 342 to 428; it reads VSNEASNTAS…QEAAVREIKS (87 aa).

Post-translationally, auto-ubiquitinated. Controls the development of T-cell clonal anergy by ubiquitination. As to expression, expressed in brain, kidney, heart, liver, ovary, testis and thymus. Expression increased as early as 4 hours by 5- to 7-fold in anergized cultures as compared to resting or activated cells.

Its subcellular location is the cytoplasm. It is found in the endomembrane system. The protein resides in the cytoskeleton. It localises to the perinuclear region. It catalyses the reaction S-ubiquitinyl-[E2 ubiquitin-conjugating enzyme]-L-cysteine + [acceptor protein]-L-lysine = [E2 ubiquitin-conjugating enzyme]-L-cysteine + N(6)-ubiquitinyl-[acceptor protein]-L-lysine.. It functions in the pathway protein modification; protein ubiquitination. In terms of biological role, E3 ubiquitin-protein ligase that catalyzes 'Lys-27', 'Lys-48'- or 'Lys-63'-linked polyubiquitin chains formation and plays a role in different biological processes such as modulation of immune response, cytoskeletal dynamics or protein homeostasis. Inhibits IL2 and IL4 transcription, thereby playing an important role in the induction of the anergic phenotype, a long-term stable state of T-lymphocyte unresponsiveness to antigenic stimulation associated with the blockade of interleukin production. Ubiquitinates ARPC5 with 'Lys-48' linkages and COR1A with 'Lys-63' linkages leading to their degradation, down-regulation of these cytoskeletal components results in impaired lamellipodium formation and reduced accumulation of F-actin at the immunological synapse. Functions in the patterning of the dorsal ectoderm; sensitizes ectoderm to respond to neural-inducing signals. Plays a positive role in innate immune response by promoting 'Lys-63'-linked ubiquitination of TBK1 after RNA- or DNA-virus infection. Regulates alveolar macrophage activation and neutrophil infiltration by interacting with TLR4, targeting it for degradation, and inhibiting NF-kappa-B activation, hence decreasing pro-inflammatory cytokines. Negatively regulates the IL-3/STAT5 signaling pathway by facilitating 'Lys-27'-linked polyubiquitination of IL3RA leading to its degradation via lysosomal pathway. Directly regulates the N-glycosylation process in the endoplasmic reticulum by targeting the glycosyl-transferase RPN1 for ubiquitination and degradation. Other substrates targeted for degradation by RNF128 include transmembrane proteins CD40L, CD83 or the tetraspanin CD151. This is E3 ubiquitin-protein ligase RNF128 (Rnf128) from Mus musculus (Mouse).